Reading from the N-terminus, the 242-residue chain is MNLILLWALLNLPVALTFDPNYKDDITPPYLIYLKSDYLPCVGVLIHPLWVITAANCNLPRLQLILGVTKPSNIDEEKYVQVVGYEKMIHHPQFSITSIEHNLMLIKLQTHIELNNYVKIVSLPKEPAAEDDTCIVSTWAYNLCDHYKDPDSLQNVNISVISKVECLKAYKYMHIRDSMMCVGIVPGRRQPCKEVTAAPAVCNGILQGILTFADGCVLRADVGIYTRIINYIPWIENTIQNN.

The first 17 residues, 1–17 (MNLILLWALLNLPVALT), serve as a signal peptide directing secretion. Residues 18–240 (FDPNYKDDIT…YIPWIENTIQ (223 aa)) form the Peptidase S1 domain. Disulfide bonds link C41/C57, C134/C202, C166/C181, and C192/C216. N-linked (GlcNAc...) asparagine glycosylation is present at N157.

Belongs to the peptidase S1 family.

It is found in the secreted. In Bos taurus (Bovine), this protein is Probable inactive serine protease 58 (PRSS58).